Consider the following 349-residue polypeptide: Replication-associated protein (349 aa).

Residues 8–116 enclose the CRESS-DNA virus Rep endonuclease domain; it reads RLNAKNYFLT…DGDTVEWGEF (109 aa). Residues 15-18 carry the RCR-1 motif; it reads FLTY. The a divalent metal cation site is built by glutamate 49, histidine 57, and histidine 59. The RCR-2 signature appears at 57–59; sequence HLH. Tyrosine 103 acts as the For DNA cleavage activity in catalysis. Positions 103–106 match the RCR-3 motif; the sequence is YIDK. Aspartate 107 serves as a coordination point for a divalent metal cation. Positions 143-153 are binding to RBR1; sequence AEEALQIIKEE. Positions 156-176 are oligomerization; it reads QHFFLQFHNIVSNANRIFQTP. Residue 221–228 coordinates ATP; sequence GPSRTGKT.

This sequence belongs to the geminiviridae Rep protein family. In terms of assembly, homooligomer. Interacts with the replication enhancer protein (REn). Interacts with host retinoblastoma-related protein 1 (RBR1), and may thereby induce the transcription of host replicative enzymes even if the cell is not dividing anymore. Interacts with host PCNA. Interacts with host SCE1 protein. Requires Mg(2+) as cofactor. The cofactor is Mn(2+).

The protein resides in the host nucleus. Its function is as follows. Essential for the replication of viral ssDNA. The closed circular ssDNA genome is first converted to a superhelical dsDNA. Rep binds a specific region at the genome origin of replication. It introduces an endonucleolytic nick within the conserved sequence 5'-TAATATTAC-3' in the intergenic region of the genome present in all geminiviruses, thereby initiating the rolling circle replication (RCR). Following cleavage, binds covalently to the 5'-phosphate of DNA as a tyrosyl ester. The cleavage gives rise to a free 3'-OH that serves as a primer for the cellular DNA polymerase. The polymerase synthesizes the (+) strand DNA by rolling circle mechanism. After one round of replication, a Rep-catalyzed nucleotidyl transfer reaction releases a circular single-stranded virus genome, thereby terminating the replication. Displays origin-specific DNA cleavage, nucleotidyl transferase, ATPase and helicase activities. The polypeptide is Replication-associated protein (Capsicum annuum (Capsicum pepper)).